Consider the following 467-residue polypeptide: Dimethylamine methyltransferase MtbB2 (467 aa).

Residue pyrrolysine 356 is a non-standard amino acid, pyrrolysine.

Belongs to the dimethylamine methyltransferase family.

It carries out the reaction Co(I)-[dimethylamine-specific corrinoid protein] + dimethylamine + H(+) = methyl-Co(III)-[dimethylamine-specific corrinoid protein] + methylamine. Its pathway is one-carbon metabolism; methanogenesis from dimethylamine. Its function is as follows. Catalyzes the transfer of a methyl group from dimethylamine to the corrinoid cofactor of MtbC. This is Dimethylamine methyltransferase MtbB2 (mtbB2) from Methanosarcina barkeri (strain Fusaro / DSM 804).